A 301-amino-acid chain; its full sequence is Asialoglycoprotein receptor 2 (301 aa).

The interval 1–29 is disordered; the sequence is MEKDFQDIQQLDSEENDHQLIGDEEQGSH. Topologically, residues 1 to 58 are cytoplasmic; it reads MEKDFQDIQQLDSEENDHQLIGDEEQGSHVQNLRTENPRWGGQPPSRPFPQRLCSKFR. Ser13 is modified (phosphoserine). Residue Cys54 is the site of S-palmitoyl cysteine attachment. A helical; Signal-anchor for type II membrane protein membrane pass occupies residues 59-79; it reads LSLLALAFNILLLVVICVVSS. Topologically, residues 80–301 are extracellular; the sequence is QSMQLQKEFW…ACERKRDITY (222 aa). Residues Asn97, Asn119, and Asn165 are each glycosylated (N-linked (GlcNAc...) asparagine). The C-type lectin domain maps to 169-295; sequence CCPVNWVEFG…QQVNRWACER (127 aa). 3 disulfide bridges follow: Cys170-Cys181, Cys198-Cys293, and Cys271-Cys285.

Interacts with LASS2. Expressed exclusively in hepatic parenchymal cells.

The protein resides in the membrane. In terms of biological role, mediates the endocytosis of plasma glycoproteins to which the terminal sialic acid residue on their complex carbohydrate moieties has been removed. The receptor recognizes terminal galactose and N-acetylgalactosamine units. After ligand binding to the receptor, the resulting complex is internalized and transported to a sorting organelle, where receptor and ligand are disassociated. The receptor then returns to the cell membrane surface. This Rattus norvegicus (Rat) protein is Asialoglycoprotein receptor 2 (Asgr2).